The following is a 433-amino-acid chain: Protein arginine N-methyltransferase 2 (433 aa).

The tract at residues 1-20 (MATSGDCPRSESQGEEPAEC) is disordered. Interaction with ESR1 stretches follow at residues 1 to 277 (MATS…SALK) and 133 to 275 (KESL…NLSA). In terms of domain architecture, SH3 spans 30–89 (VQPEEFVAIADYAATDETQLSFLRGEKILILRQTTADWWWGERAGCCGYIPANHVGKHVD). An asymmetric dimethylarginine mark is found at arginine 61 and arginine 72. Positions 83–207 (HVGKHVDEYD…DVVLPEKVDV (125 aa)) are interaction with RB1. The 334-residue stretch at 99 to 432 (DEEYFGSYGT…KVGEKVFPIW (334 aa)) folds into the SAM-dependent MTase PRMT-type domain. S-adenosyl-L-methionine-binding residues include histidine 112, arginine 121, glycine 145, glutamate 168, and glutamate 197. Catalysis depends on residues glutamate 211 and glutamate 220.

It belongs to the class I-like SAM-binding methyltransferase superfamily. Protein arginine N-methyltransferase family. In terms of assembly, self-associates. Interacts with RB1 and E2F1. Interacts with NCOA6 coactivator. Interacts (via SH3 domain) with PRMT8. Interacts with AR. Interacts with NFKBIA. Interacts with ESR1, ESR2, PGR, PPARG, RARA, RXRA and THRB. Interacts with HNRNPUL1. Widely expressed. Highly expressed in androgen target organs such as heart, prostate, skeletal muscle, ovary and spinal cord.

It is found in the cytoplasm. It localises to the nucleus. Its subcellular location is the nucleolus. It catalyses the reaction L-arginyl-[protein] + 2 S-adenosyl-L-methionine = N(omega),N(omega)-dimethyl-L-arginyl-[protein] + 2 S-adenosyl-L-homocysteine + 2 H(+). Functionally, arginine methyltransferase that methylates the guanidino nitrogens of arginyl residues in proteins such as STAT3, FBL, histone H4. Acts as a coactivator (with NCOA2) of the androgen receptor (AR)-mediated transactivation. Acts as a coactivator (with estrogen) of estrogen receptor (ER)-mediated transactivation. Enhances PGR, PPARG, RARA-mediated transactivation. May inhibit NF-kappa-B transcription and promote apoptosis. Represses E2F1 transcriptional activity (in a RB1-dependent manner). May be involved in growth regulation. This is Protein arginine N-methyltransferase 2 (PRMT2) from Homo sapiens (Human).